A 141-amino-acid chain; its full sequence is Hemoglobin subunit alpha (141 aa).

Residues 1-141 (VLSSKDKANV…VSTVLTSKYR (141 aa)) form the Globin domain. Ser3 bears the Phosphoserine mark. N6-succinyllysine occurs at positions 7 and 11. Position 16 is an N6-acetyllysine; alternate (Lys16). An N6-succinyllysine; alternate modification is found at Lys16. Position 24 is a phosphotyrosine (Tyr24). Lys40 bears the N6-succinyllysine mark. The residue at position 49 (Ser49) is a Phosphoserine. Residue His58 participates in O2 binding. His87 contributes to the heme b binding site. A Phosphoserine modification is found at Ser102. Residue Thr108 is modified to Phosphothreonine. Ser124 carries the post-translational modification Phosphoserine. Phosphothreonine is present on residues Thr134 and Thr137. Ser138 carries the post-translational modification Phosphoserine.

The protein belongs to the globin family. As to quaternary structure, heterotetramer of two alpha chains and two beta chains. As to expression, red blood cells.

Involved in oxygen transport from the lung to the various peripheral tissues. Its function is as follows. Hemopressin acts as an antagonist peptide of the cannabinoid receptor CNR1. Hemopressin-binding efficiently blocks cannabinoid receptor CNR1 and subsequent signaling. The protein is Hemoglobin subunit alpha (HBA) of Lama vicugna (Vicugna).